We begin with the raw amino-acid sequence, 195 residues long: Small ribosomal subunit protein uS4 (195 aa).

An S4 RNA-binding domain is found at 109–183; it reads RRLQTQVFKL…VKRKNLKKNQ (75 aa). Positions 165-195 are disordered; that stretch reads PFGGGRPGRVKRKNLKKNQGGGGGAAEEEED.

It belongs to the universal ribosomal protein uS4 family. As to quaternary structure, component of the small ribosomal subunit. Identified in a IGF2BP1-dependent mRNP granule complex containing untranslated mRNAs. Part of the small subunit (SSU) processome, composed of more than 70 proteins and the RNA chaperone small nucleolar RNA (snoRNA) U3.

The protein resides in the cytoplasm. It is found in the nucleus. It localises to the nucleolus. Its function is as follows. Component of the small ribosomal subunit. The ribosome is a large ribonucleoprotein complex responsible for the synthesis of proteins in the cell. Part of the small subunit (SSU) processome, first precursor of the small eukaryotic ribosomal subunit. During the assembly of the SSU processome in the nucleolus, many ribosome biogenesis factors, an RNA chaperone and ribosomal proteins associate with the nascent pre-rRNA and work in concert to generate RNA folding, modifications, rearrangements and cleavage as well as targeted degradation of pre-ribosomal RNA by the RNA exosome. The protein is Small ribosomal subunit protein uS4 of Drosophila melanogaster (Fruit fly).